Reading from the N-terminus, the 821-residue chain is Leucine--tRNA ligase (821 aa).

A 'HIGH' region motif is present at residues 44 to 54 (PYPSGRIHMGH). The 'KMSKS' region motif lies at 589-593 (KMSKS). K592 contacts ATP.

Belongs to the class-I aminoacyl-tRNA synthetase family.

Its subcellular location is the cytoplasm. The enzyme catalyses tRNA(Leu) + L-leucine + ATP = L-leucyl-tRNA(Leu) + AMP + diphosphate. This chain is Leucine--tRNA ligase, found in Campylobacter concisus (strain 13826).